Here is a 153-residue protein sequence, read N- to C-terminus: Interleukin-17A (153 aa).

Residues 1-23 form the signal peptide; the sequence is MASMRTSSMSLLLLLSLVALVKA. Asn53 is a glycosylation site (N-linked (GlcNAc...) asparagine). The tract at residues 56-76 is disordered; it reads TNSRRPTDYHKRSTSPWTLHR. Cystine bridges form between Cys92–Cys142 and Cys97–Cys144.

This sequence belongs to the IL-17 family. Homodimer. Forms complexes with IL17RA and IL17RC receptors with 2:1 binding stoichiometry: two receptor chains for one interleukin molecule. IL17A homodimer preferentially drives the formation of IL17RA-IL17RC heterodimeric receptor complex. IL17A homodimer adopts an asymmetrical ternary structure with one IL17RA molecule, allowing for high affinity interactions of one IL17A monomer with one IL17RA molecule (via D1 and D2 domains), while disfavoring binding of a second IL17RA molecule on the other IL17A monomer. Heterodimer with IL17F. IL17A-IL17F forms complexes with IL17RA-IL17RC, but with lower affinity when compared to IL17A homodimer. IL17RA and IL17RC chains cannot distinguish between IL17A and IL17F molecules, potentially enabling the formation of topologically distinct complexes.

It is found in the secreted. In terms of biological role, effector cytokine of innate and adaptive immune system involved in antimicrobial host defense and maintenance of tissue integrity. Signals via IL17RA-IL17RC heterodimeric receptor complex, triggering homotypic interaction of IL17RA and IL17RC chains with TRAF3IP2 adapter. This leads to downstream TRAF6-mediated activation of NF-kappa-B and MAPkinase pathways ultimately resulting in transcriptional activation of cytokines, chemokines, antimicrobial peptides and matrix metalloproteinases, with potential strong immune inflammation. Plays an important role in connecting T cell-mediated adaptive immunity and acute inflammatory response to destroy extracellular bacteria and fungi. As a signature effector cytokine of T-helper 17 cells (Th17), primarily induces neutrophil activation and recruitment at infection and inflammatory sites. In airway epithelium, mediates neutrophil chemotaxis via induction of CXCL1 and CXCL5 chemokines. In secondary lymphoid organs, contributes to germinal center formation by regulating the chemotactic response of B cells to CXCL12 and CXCL13, enhancing retention of B cells within the germinal centers, B cell somatic hypermutation rate and selection toward plasma cells. Effector cytokine of a subset of gamma-delta T cells that functions as part of an inflammatory circuit downstream IL1B, TLR2 and IL23A-IL12B to promote neutrophil recruitment for efficient bacterial clearance. Effector cytokine of innate immune cells including invariant natural killer cell (iNKT) and group 3 innate lymphoid cells that mediate initial neutrophilic inflammation. Involved in the maintenance of the integrity of epithelial barriers during homeostasis and pathogen infection. Upon acute injury, has a direct role in epithelial barrier formation by regulating OCLN localization and tight junction biogenesis. As part of the mucosal immune response induced by commensal bacteria, enhances host's ability to resist pathogenic bacterial and fungal infections by promoting neutrophil recruitment and antimicrobial peptides release. In synergy with IL17F, mediates the production of antimicrobial beta-defensins DEFB1, DEFB103A, and DEFB104A by mucosal epithelial cells, limiting the entry of microbes through the epithelial barriers. Involved in antiviral host defense through various mechanisms. Enhances immunity against West Nile virus by promoting T cell cytotoxicity. May play a beneficial role in influenza A virus (H5N1) infection by enhancing B cell recruitment and immune response in the lung. Contributes to influenza A virus (H1N1) clearance by driving the differentiation of B-1a B cells, providing for production of virus-specific IgM antibodies at first line of host defense. This chain is Interleukin-17A (IL17A), found in Bos taurus (Bovine).